A 132-amino-acid chain; its full sequence is Small ribosomal subunit protein uS8 (132 aa).

The protein belongs to the universal ribosomal protein uS8 family. Part of the 30S ribosomal subunit. Contacts proteins S5 and S12.

Its function is as follows. One of the primary rRNA binding proteins, it binds directly to 16S rRNA central domain where it helps coordinate assembly of the platform of the 30S subunit. The sequence is that of Small ribosomal subunit protein uS8 from Heliobacterium modesticaldum (strain ATCC 51547 / Ice1).